A 168-amino-acid chain; its full sequence is Leukotoxin-activating lysine-acyltransferase LtxC (168 aa).

Catalysis depends on residues His-23 and Asp-92.

This sequence belongs to the RTX toxin acyltransferase family.

Its subcellular location is the cytoplasm. It catalyses the reaction a fatty acyl-[ACP] + L-lysyl-[protein] = N(6)-(fatty acyl)-L-lysyl-[protein] + holo-[ACP] + H(+). In terms of biological role, required for full activity and modification of the LtxA leukotoxin. Involved in fatty acid modification of the protoxin at two internal lysine residues, thereby converting it to the active toxin. This Aggregatibacter actinomycetemcomitans (Actinobacillus actinomycetemcomitans) protein is Leukotoxin-activating lysine-acyltransferase LtxC.